Consider the following 536-residue polypeptide: MSKFVFVTGGVVSSIGKGIVAASLGRLLKSRGYSVSILKLDPYLNVDPGTMSPFQHGEVFVTEDGAETDLDLGHYERFTDTAMTRLNSVTTGSIYQAVINKERRGSYNGGTVQVIPHITGEIRERIHRVAANSNADIIITEIGGTVGDIESLPFLEAIREFKNDVNRNDVAYIHVTLLPFIKTSGEIKTKPTQHSVKELRSIGIQPDLLVCRSDKSINEGLKKKLSGFCGVNIKSVIEALDADSIYSVPLALKKEGLCKETLKYLELEDKECDLKNWEALIHNLRNPGDPIKVALVGKYIELGDAYLSVVEALRHACIEKKASLDLHWVSAEMIEKGSAETYLKEVDAIVVPGGFGNRGVNGKISAIKFAREKKIPFLGLCLGMQCAVIEWARNVANLPDASSSELNPDTPNPVIHLLPEQEDVVDLGGTMRLGVYPCRLTNNTTGKKLYDEDVIYERHRHRYEFNNYYKQSFLNSGYKISGTSPDGRLVELIELENHPYFLACQYHPEFLSRPGKPHPLFQGLIKASQEKLTQSN.

Residues 1-267 (MSKFVFVTGG…CKETLKYLEL (267 aa)) form an amidoligase domain region. Ser-13 contacts CTP. Ser-13 serves as a coordination point for UTP. ATP is bound by residues 14 to 19 (SIGKGI) and Asp-71. 2 residues coordinate Mg(2+): Asp-71 and Glu-141. CTP-binding positions include 148–150 (DIE), 188–193 (KTKPTQ), and Lys-224. UTP contacts are provided by residues 188–193 (KTKPTQ) and Lys-224. Residues 292–534 (KVALVGKYIE…IKASQEKLTQ (243 aa)) form the Glutamine amidotransferase type-1 domain. Gly-354 contributes to the L-glutamine binding site. Catalysis depends on Cys-381, which acts as the Nucleophile; for glutamine hydrolysis. Residues 382–385 (LGMQ), Glu-405, and Arg-462 each bind L-glutamine. Active-site residues include His-507 and Glu-509.

The protein belongs to the CTP synthase family. As to quaternary structure, homotetramer.

The enzyme catalyses UTP + L-glutamine + ATP + H2O = CTP + L-glutamate + ADP + phosphate + 2 H(+). It catalyses the reaction L-glutamine + H2O = L-glutamate + NH4(+). It carries out the reaction UTP + NH4(+) + ATP = CTP + ADP + phosphate + 2 H(+). It functions in the pathway pyrimidine metabolism; CTP biosynthesis via de novo pathway; CTP from UDP: step 2/2. Allosterically activated by GTP, when glutamine is the substrate; GTP has no effect on the reaction when ammonia is the substrate. The allosteric effector GTP functions by stabilizing the protein conformation that binds the tetrahedral intermediate(s) formed during glutamine hydrolysis. Inhibited by the product CTP, via allosteric rather than competitive inhibition. In terms of biological role, catalyzes the ATP-dependent amination of UTP to CTP with either L-glutamine or ammonia as the source of nitrogen. Regulates intracellular CTP levels through interactions with the four ribonucleotide triphosphates. This chain is CTP synthase, found in Prochlorococcus marinus (strain MIT 9215).